A 161-amino-acid chain; its full sequence is V-type proton ATPase subunit c (161 aa).

Residues 1–9 (MSTDLCPVY) are Lumenal-facing. Residues 10–32 (APFFGVMGCTAAIVFASFGAAYG) traverse the membrane as a helical segment. Residues 33–54 (TAKAGVGISAMGVLRPDLIVKN) are Cytoplasmic-facing. A helical membrane pass occupies residues 55–75 (TIPVVMAGIIAIYGLVVSVLI). Residues 76 to 91 (SGNLKQILSLYSGFIQ) are Lumenal-facing. Residues 92–113 (LGAGLSVGLAGLAAGFAIGIVG) traverse the membrane as a helical segment. Topologically, residues 114 to 125 (DAGVRGTAQQPR) are cytoplasmic. Residues 126-151 (LFVAMILILIFAEVLGLYGLIVALLL) traverse the membrane as a helical segment. Residues 152-161 (NTRATDNVTC) lie on the Lumenal side of the membrane.

The protein belongs to the V-ATPase proteolipid subunit family. In terms of assembly, V-ATPase is a heteromultimeric enzyme composed of a peripheral catalytic V1 complex (components A to H) attached to an integral membrane V0 proton pore complex (components: a, c, c', c'', d, e, f and VOA1). The decameric c-ring forms the proton-conducting pore, and is composed of eight proteolipid subunits c, one subunit c' and one subunit c''.

Its subcellular location is the vacuole membrane. In terms of biological role, proton-conducting pore forming subunit of the V0 complex of vacuolar(H+)-ATPase (V-ATPase), a multisubunit enzyme composed of a peripheral complex (V1) that hydrolyzes ATP and a membrane integral complex (V0) that translocates protons. V-ATPase is responsible for acidifying and maintaining the pH of intracellular compartments. This Schizosaccharomyces pombe (strain 972 / ATCC 24843) (Fission yeast) protein is V-type proton ATPase subunit c.